Consider the following 51-residue polypeptide: Large ribosomal subunit protein eL39 (51 aa).

The protein belongs to the eukaryotic ribosomal protein eL39 family.

The protein is Large ribosomal subunit protein eL39 of Thermococcus sibiricus (strain DSM 12597 / MM 739).